We begin with the raw amino-acid sequence, 341 residues long: Glucokinase (341 aa).

7–12 serves as a coordination point for ATP; it reads GDIGGT.

Belongs to the bacterial glucokinase family.

Its subcellular location is the cytoplasm. The enzyme catalyses D-glucose + ATP = D-glucose 6-phosphate + ADP + H(+). This is Glucokinase from Nostoc punctiforme (strain ATCC 29133 / PCC 73102).